The sequence spans 189 residues: Elongation factor P (189 aa).

The residue at position 34 (K34) is an N6-(3,6-diaminohexanoyl)-5-hydroxylysine.

It belongs to the elongation factor P family. In terms of processing, may be beta-lysylated on the epsilon-amino group of Lys-34 by the combined action of EpmA and EpmB, and then hydroxylated on the C5 position of the same residue by EpmC (if this protein is present). Lysylation is critical for the stimulatory effect of EF-P on peptide-bond formation. The lysylation moiety may extend toward the peptidyltransferase center and stabilize the terminal 3-CCA end of the tRNA. Hydroxylation of the C5 position on Lys-34 may allow additional potential stabilizing hydrogen-bond interactions with the P-tRNA.

The protein resides in the cytoplasm. The protein operates within protein biosynthesis; polypeptide chain elongation. Functionally, involved in peptide bond synthesis. Alleviates ribosome stalling that occurs when 3 or more consecutive Pro residues or the sequence PPG is present in a protein, possibly by augmenting the peptidyl transferase activity of the ribosome. Modification of Lys-34 is required for alleviation. The chain is Elongation factor P from Alkalilimnicola ehrlichii (strain ATCC BAA-1101 / DSM 17681 / MLHE-1).